We begin with the raw amino-acid sequence, 2763 residues long: MDIIPPIAVTVAGVGSRNQFDGALGPASGLSCLRTSLSFLHMTYAHGINATLSSDMIDGCLQEGAAWTTDLSNMGRGVPDMCALVDLPNRISYIKLGDTTSTCCVLSRIYGDSHFFTVPDEGFMCTQIPARAFFDDVWMGREESYTIITVDSTGMAIYRQGNISFIFDPHGHGTIGQAVVVRVNTTDVYSYIASEYTHRPDNVESQWAAALVFFVTANDGPVSEEALSSAVTLIYGSCDTYFTDEQYCEKLVTAQHPLLLSPPNSTTIVLNKSSIVPLHQNVGESVSLEATLHSTLTNTVALDPRCSYSEVDPWHAVLETTSTGSGVLDCRRRRRPSWTPPSSEENLACIDDGLVNNTHSTDNLHKPAKKVLKFKPTVDVPDKTQVAHVLPRLREVANTPDVVLNVSNVDTPESSPTFSRNMNVGSSLKDRKPFLFEQSGDVNMVVEKLLQHGHEISNGYVQNAVGTLDTVITGHTNVPIWVTRPLVMPDEKDPLELFINLTILRLTGFVVENGTRTHHGATSVVSDFIGPLGEILTGFPSAAELIRVTSLILTNMPGAEYAIKTVLRKKCTIGMLIIAKFGLVAMRVQDTTGALHAELDVLEADLGGSSPIDLYSRLSTGLISILNSPIISHPGLFAELIPTRTGSLSERIRLLCELVSARETRYMREHTALVSSVKALENALRSTRNKIDAIQIPEVPQEPPEETDIPPEELIRRVYEIRSEVTMLLTSAVTEYFTRGVLYSTRALIAEQSPRRFRVATASTAPIQRLLDSLPEFDAKLTAIISSLSIHPPPETIQNLPVVSLLKELIKEGEDLNTDTALVSWLSVVGEAQTAGYLSRREFDELSRTIKTINTRATQRASAEAELSCFNTLSAAVDQAVKDYETYNNGEVKYPEITRDDLLATIVRATDDLVRQIKILSDPMIQSGLQPSIKRRLETRLKEVQTYANEARTTQDTIKSRKQAAYNKLGGLLRPVTGFVGLRAAVDLLPELASELDVQGALVNLRTKVLEAPVEIRSQLTGDFWALFNQYRDILEHPGNARTSVLGGLGACFTAIIEIVPIPTEYRPSLLAFFGDVADVLASDIATVSTNPESESAINAVVATLSKATLVSSTVPALSFVLSLYKKYQALQQEITNTHKLTELQKQLGDDFSTLAVSSGHLKFISSSNVDDYEINDAILSIQTNVHALMDTVKLVEVELQKLPPHCIAGTSTLSRVVKDLHKLVTMAHEKKEQAKVLITDCERAHKQQTTRVLYERWTRDIIACLEAMETRHVFNGTELARLRDMAAAGGFDIHAVYPQARQVVAACETTAVTALDTVFRHNPHTPENTNIPPPLALLRGLTWFDDFSITAPVFTVMFPGVSIEGLLLLMRIRAVVLLSADTSINGIPNYRDMILRTSGDLLQIPALAGYVDFYTRSYDQFITESVTLSELRADIRQAAGAKLTEANKALEEVTHVRAHETAKLALKEGVFITLPSEGLLIRAIEYFTTFDHKRFIGTAYERVLQTMVDRDLKEANAELAQFRMVCQATKNRAIQILQNIVDTANATEQQEDVDFTNLKTLLKLTPPPKTIALAIDRSTSVQDIVTQFALLLGRLEEETGTLDIQAVDWMYQARNIIDSHPLSVRIDGTGPLHTYKDRVDKLYALRTKLDLLRRRIETGEVTWDDAWTTFKRETGDMLASGDTYATSVDSIKALQASASVVDMLCSEPEFFLLPVETKNRLQKKQQERKTALDVVLQKQRQFEETASRLRALIERIPTESDHDVLRMLLHDFDQFTHLPIWIKTQYMTFRNLLMVRLGLYASYAEIFPPASPNGVFAPIPAMSGVCLEDQSRCIRARVAAFMGEASVVQTFREARSSIDALFGKNLTFYLDTDGVPLRYRVCYKSVGVKLGTMLCSQGGLSLRPALPDEGIVEETTLSALRVANEVNELRIEYESAIKSGFSAFSTFVRHRHAEWGKTNARRAIAEIYAGLITTTLTRQYGVHWDKLIYSFEKHHLTSVMGNGLTKPIQRRGDVRVLELTLSDIVTILVATTPVHLLNFARLDLIKQHEYMARTLRPVIEAAFRGRLLVRSLDGDPKGNARAFFNAAPSKHKLPLALGSNQDPTGGRIFAFRMADWKLVKMPQKITDPFAPWQLSPPPGVKANVDAVTRIMATDRLATITVLGRMCLPPISLVSMWNTLQPEEFAYRTQDDVDIIVDARLDLSSTLNARFDTAPSNTTLEWNTDRKVITDAYIQTGATTVFTVTGAAPTHVSNVTAFDIATTAILFGAPLVIAMELTSVFSQNSGLTLGLKLFDSRHMATDSGISSAVSPDIVSWGLRLLHMDPHPIENACLIVQLEKLSALIANKPLTNNPPCLLLLDEHMNPSYVLWERKDSIPAPDYVVFWGPESLIDLPYIDSDEDSFPSCPDDPFYSQIIAGYAPQGPPNLDTTDFYPTEPLFKSPVQVVRSSKCKKMPVQPVQPAQPVQPAQPAQPVQPAQPIEPGTQIVVQNFKKPQSVKTTLSQKDIPLYVETESETAVLIPKQLTTSIKTTVCKSITPPNNQLSDWKNNPQQNQTLNQAFNKPILEITSIPTDDSISYRTWIEKSNQTQKRHQNDPRMYNSKTVFHPVNNQLPSWVDTAADAPQTDLLTNYKTRQPSPNFPRDVHTWGVSSNPFNSPNRDLYESDFSEPSDGYSSESENSIVLSLDEHRSCRVPRHVRVVNADVVTGRRYVRGTALGALALLSQACRRMIDNVRYTRKLLMDHTEDIFQGLGYVKLLLDGTYI.

Residues Met1–Tyr247 are deubiquitination activity. A Peptidase C76 domain is found at Ala12–Ser237. Catalysis depends on residues Cys32, Asp168, and His170. The interval Leu495–Ser523 is interaction with inner tegument protein. A run of 8 repeats spans residues Pro2455 to Gln2457, Pro2458 to Gln2460, Pro2461 to Gln2463, Pro2464 to Gln2466, Pro2467 to Gln2469, Pro2470 to Gln2472, Pro2473 to Gln2475, and Pro2476 to Gln2478. The 8 X 3 AA repeats of P-A/V-Q stretch occupies residues Pro2455 to Gln2478. The interval Asn2630–Ser2651 is disordered.

It belongs to the herpesviridae large tegument protein family. As to quaternary structure, interacts with host CUL1 and CUL4A; these interactions inhibit the E3 ligase activity of cullins. Interacts with inner tegument protein. Interacts with capsid vertex specific component CVC2. Interacts with the major capsid protein/MCP.

It is found in the virion tegument. The protein resides in the host cytoplasm. It localises to the host nucleus. It catalyses the reaction Thiol-dependent hydrolysis of ester, thioester, amide, peptide and isopeptide bonds formed by the C-terminal Gly of ubiquitin (a 76-residue protein attached to proteins as an intracellular targeting signal).. In terms of biological role, large tegument protein that plays multiple roles in the viral cycle. During viral entry, remains associated with the capsid while most of the tegument is detached and participates in the capsid transport toward the host nucleus. Plays a role in the routing of the capsid at the nuclear pore complex and subsequent uncoating. Within the host nucleus, acts as a deneddylase and promotes the degradation of nuclear CRLs (cullin-RING ubiquitin ligases) and thereby stabilizes nuclear CRL substrates, while cytoplasmic CRLs remain unaffected. These modifications prevent host cell cycle S-phase progression and create a favorable environment allowing efficient viral genome replication. Participates later in the secondary envelopment of capsids. Indeed, plays a linker role for the association of the outer viral tegument to the capsids together with the inner tegument protein. This chain is Large tegument protein deneddylase, found in Varicella-zoster virus (strain Oka vaccine) (HHV-3).